The sequence spans 950 residues: uncharacterized protein (950 aa).

This is an uncharacterized protein from Rickettsia prowazekii (strain Madrid E).